Consider the following 963-residue polypeptide: Protocadherin alpha-C1 (963 aa).

A signal peptide spans 1–18; that stretch reads MVGWGVAVLCLWVSCGAA. Cadherin domains are found at residues 19-124, 125-233, 234-340, 349-445, and 446-555; these read AGQL…SPLF, PAGD…APVF, ERSV…APEL, VPED…TPSF, and PQPQ…YPVI. The Extracellular segment spans residues 19 to 683; it reads AGQLEYSVPE…GGQLSAQNLY (665 aa). An N-linked (GlcNAc...) asparagine glycan is attached at asparagine 38. Residues asparagine 248 and asparagine 274 are each glycosylated (N-linked (GlcNAc...) asparagine). N-linked (GlcNAc...) asparagine glycosylation is present at asparagine 562. Positions 570–667 constitute a Cadherin 6 domain; sequence VPRSARTGHL…NSVPQLLPDF (98 aa). Residues 684–704 form a helical membrane-spanning segment; it reads LVIALACISFLFLGCLLFFVC. Topologically, residues 705–963 are cytoplasmic; that stretch reads TKLHQSPGCC…GNSTTDNSDQ (259 aa). 4 PXXP repeats span residues 812–815, 845–848, 886–889, and 904–907; these read PRQP, PGGP, PGNP, and PGSP. The tract at residues 812–907 is 4 X 4 AA repeats of P-X-X-P; that stretch reads PRQPNPDWRY…PDKFIIPGSP (96 aa). A disordered region spans residues 844–902; that stretch reads GPGGPDQQWPTVSSATPEPEAGEVSPPVGAGVNSNSWTFKYGPGNPKQSGPGELPDKFI. The disordered stretch occupies residues 914-963; the sequence is QEPANSQIDKSDFITFGKKEETKKKKKKKKGNKTQEKKEKGNSTTDNSDQ. Residues 922–936 are compositionally biased toward basic and acidic residues; the sequence is DKSDFITFGKKEETK.

It is found in the cell membrane. Functionally, potential calcium-dependent cell-adhesion protein. May be involved in the establishment and maintenance of specific neuronal connections in the brain. This Pan troglodytes (Chimpanzee) protein is Protocadherin alpha-C1 (PCDHAC1).